The sequence spans 427 residues: 3-phosphoshikimate 1-carboxyvinyltransferase (427 aa).

3-phosphoshikimate is bound by residues Lys20, Ser21, and Arg25. Residue Lys20 coordinates phosphoenolpyruvate. Residues Gly92 and Arg120 each contribute to the phosphoenolpyruvate site. 4 residues coordinate 3-phosphoshikimate: Ser166, Gln168, Asp312, and Lys339. Gln168 contacts phosphoenolpyruvate. Residue Asp312 is the Proton acceptor of the active site. Residues Arg343 and Arg385 each contribute to the phosphoenolpyruvate site.

The protein belongs to the EPSP synthase family. As to quaternary structure, monomer.

It localises to the cytoplasm. It catalyses the reaction 3-phosphoshikimate + phosphoenolpyruvate = 5-O-(1-carboxyvinyl)-3-phosphoshikimate + phosphate. The protein operates within metabolic intermediate biosynthesis; chorismate biosynthesis; chorismate from D-erythrose 4-phosphate and phosphoenolpyruvate: step 6/7. Its function is as follows. Catalyzes the transfer of the enolpyruvyl moiety of phosphoenolpyruvate (PEP) to the 5-hydroxyl of shikimate-3-phosphate (S3P) to produce enolpyruvyl shikimate-3-phosphate and inorganic phosphate. This chain is 3-phosphoshikimate 1-carboxyvinyltransferase, found in Streptococcus gordonii (strain Challis / ATCC 35105 / BCRC 15272 / CH1 / DL1 / V288).